A 450-amino-acid polypeptide reads, in one-letter code: Bifunctional apoptosis regulator (450 aa).

A disordered region spans residues 1-24; that stretch reads MEEPQKNDLSMRGQEEDHPVRSSG. Residues 1–140 are Cytoplasmic-facing; the sequence is MEEPQKNDLS…PSTGRVNQQR (140 aa). Residues 34–74 form an RING-type zinc finger; sequence CHCCYDTLVNPTTLNCGHSFCRHCLALWWMSSKKTECPECR. Residues 141 to 161 traverse the membrane as a helical segment; the sequence is GGGFFSGVLTALTGVAVILLV. Topologically, residues 162-331 are extracellular; that stretch reads YHWRSRESEH…REPTWKQWRE (170 aa). The SAM domain maps to 182 to 249; sequence WTTEEVVLWL…LMELERVRAL (68 aa). An N-linked (GlcNAc...) asparagine glycan is attached at asparagine 232. Residues 332-352 traverse the membrane as a helical segment; that stretch reads FLIKYSFLPYQLIAEFAWDWL. Over 353 to 360 the chain is Cytoplasmic; sequence EVHYWTSR. A helical transmembrane segment spans residues 361 to 381; it reads FLIVNAMLLSVLELFSFWRIW. Over 382–404 the chain is Extracellular; that stretch reads SRSELKTVPQRMWSHFWKVSTQG. The helical transmembrane segment at 405–425 threads the bilayer; it reads LFMAMFWPLIPQFVCNCLFYW. Residues 426–450 are Cytoplasmic-facing; sequence ALYFNPIINIDLVVKEIRRLETQVF.

In terms of assembly, interacts with CASP8, BCL2 and BCL2L1 through SAM domain and also with HIP1, IFT57, ESRRBL1 and BCAP31. Interacts with NGFR; this interaction inhibits NF-kappa-B and JNK-related signaling pathways. In terms of processing, mediates RING-dependent self-ubiquitination leading to proteasomal degradation.

The protein localises to the endoplasmic reticulum membrane. The catalysed reaction is S-ubiquitinyl-[E2 ubiquitin-conjugating enzyme]-L-cysteine + [acceptor protein]-L-lysine = [E2 ubiquitin-conjugating enzyme]-L-cysteine + N(6)-ubiquitinyl-[acceptor protein]-L-lysine.. Membrane-bound E3 ubiquitin ligase that plays a role in several processes including apoptosis regulation or reticulum endoplasmic stress. Has anti-apoptotic activity, both for apoptosis triggered via death-receptors and via mitochondrial factors. Contributes to the dynamic control of IRE1/ERN1 signaling during ER stress by inducing BAX inhibitor 1/TMBIM6 proteasomal degradation. Promotes the activation of TGF-beta signaling by mediating the 'Lys-63'-linked ubiquitination of TGFBR1 which is critical to activate the pathway. Together with NGFR, negatively regulates NF-kappa-B and JNK-related signaling pathways. Promotes the proteasome-mediated degradation of PNPLA3, a protein involveld in lipid metabolism. The protein is Bifunctional apoptosis regulator (Bfar) of Rattus norvegicus (Rat).